A 565-amino-acid chain; its full sequence is NAD-dependent malic enzyme (565 aa).

Tyrosine 104 serves as the catalytic Proton donor. Arginine 157 contributes to the NAD(+) binding site. Lysine 175 serves as the catalytic Proton acceptor. A divalent metal cation contacts are provided by glutamate 246, aspartate 247, and aspartate 270. 2 residues coordinate NAD(+): aspartate 270 and asparagine 418.

This sequence belongs to the malic enzymes family. Homotetramer. Requires Mg(2+) as cofactor. Mn(2+) serves as cofactor.

It catalyses the reaction (S)-malate + NAD(+) = pyruvate + CO2 + NADH. It carries out the reaction oxaloacetate + H(+) = pyruvate + CO2. This Escherichia coli O127:H6 (strain E2348/69 / EPEC) protein is NAD-dependent malic enzyme.